The chain runs to 421 residues: Testin (421 aa).

The 108-residue stretch at 92–199 folds into the PET domain; it reads MILTNPVAAK…GDVKLPREMD (108 aa). A disordered region spans residues 134 to 164; the sequence is KQPVAGSEGAQYRKKQLAKQLPAHDQDPSKC. Positions 155-164 are enriched in basic and acidic residues; that stretch reads PAHDQDPSKC. LIM zinc-binding domains lie at 234–297, 299–359, and 362–421; these read YSCY…CDSE, PRCA…NHAV, and QGCH…KMMS.

It belongs to the prickle / espinas / testin family. In terms of assembly, interacts via LIM domain 1 with ZYX. Interacts (via LIM domain 3) with ENAH and VASP. Interacts with ALKBH4, talin, actin, alpha-actinin, GRIP1 and PXN. Interacts (via LIM domain 2) with ACTL7A (via N-terminus). Heterodimer with ACTL7A; the heterodimer interacts with ENAH to form a heterotrimer.

The protein resides in the cytoplasm. The protein localises to the cell junction. It localises to the focal adhesion. Its function is as follows. Scaffold protein that may play a role in cell adhesion, cell spreading and in the reorganization of the actin cytoskeleton. Plays a role in the regulation of cell proliferation. May act as a tumor suppressor. The chain is Testin (TES) from Rhinolophus ferrumequinum (Greater horseshoe bat).